The chain runs to 326 residues: DNA-directed RNA polymerase subunit alpha (326 aa).

Residues 1 to 231 form an alpha N-terminal domain (alpha-NTD) region; sequence MQSNALLKPR…DQLSVFADLE (231 aa). The interval 245 to 326 is alpha C-terminal domain (alpha-CTD); it reads IDPVLLRPVD…WPPAGLEKLG (82 aa).

It belongs to the RNA polymerase alpha chain family. In terms of assembly, homodimer. The RNAP catalytic core consists of 2 alpha, 1 beta, 1 beta' and 1 omega subunit. When a sigma factor is associated with the core the holoenzyme is formed, which can initiate transcription.

The enzyme catalyses RNA(n) + a ribonucleoside 5'-triphosphate = RNA(n+1) + diphosphate. Its function is as follows. DNA-dependent RNA polymerase catalyzes the transcription of DNA into RNA using the four ribonucleoside triphosphates as substrates. In Azoarcus sp. (strain BH72), this protein is DNA-directed RNA polymerase subunit alpha.